Consider the following 100-residue polypeptide: Ribosomal processing cysteine protease Prp (100 aa).

Residue His16 is the Proton donor of the active site. The active-site Nucleophile is Cys28.

It belongs to the Prp family. Homodimer.

Functionally, an essential cysteine protease that cleaves the N-terminus from ribosomal protein bL27. This chain is Ribosomal processing cysteine protease Prp, found in Mycoplasma pneumoniae (strain ATCC 29342 / M129 / Subtype 1) (Mycoplasmoides pneumoniae).